Reading from the N-terminus, the 22-residue chain is Heat shock 70-related protein 1, mitochondrial (22 aa).

The protein belongs to the heat shock protein 70 family.

Its subcellular location is the mitochondrion. In Leishmania tarentolae (Sauroleishmania tarentolae), this protein is Heat shock 70-related protein 1, mitochondrial.